Here is a 169-residue protein sequence, read N- to C-terminus: Myosin regulatory light chain 11 (169 aa).

Alanine 2 carries the post-translational modification N,N,N-trimethylalanine. Phosphoserine is present on residues serine 15 and serine 16. A phosphothreonine mark is found at threonine 25 and threonine 35. Residues 25-60 (TQIQEFKEAFTVIDQNRDGIIDKEDLRDTFAAMGRL) form the EF-hand 1 domain. Positions 38, 40, 42, and 49 each coordinate Ca(2+). At serine 75 the chain carries Phosphoserine. 2 consecutive EF-hand domains span residues 95–130 (DPED…QCDR) and 131–166 (FSQE…GDAK). Threonine 101 carries the post-translational modification Phosphothreonine.

In terms of assembly, myosin is a hexamer of 2 heavy chains and 4 light chains.

Its function is as follows. Myosin regulatory subunit that plays an essential role to maintain muscle integrity during early development. Plays a role in regulation of muscle contraction. The chain is Myosin regulatory light chain 11 (Myl11) from Mus musculus (Mouse).